A 482-amino-acid chain; its full sequence is tRNA(Ile)-lysidine synthase (482 aa).

28–33 (SGGPDS) contributes to the ATP binding site.

This sequence belongs to the tRNA(Ile)-lysidine synthase family.

It is found in the cytoplasm. It carries out the reaction cytidine(34) in tRNA(Ile2) + L-lysine + ATP = lysidine(34) in tRNA(Ile2) + AMP + diphosphate + H(+). Ligates lysine onto the cytidine present at position 34 of the AUA codon-specific tRNA(Ile) that contains the anticodon CAU, in an ATP-dependent manner. Cytidine is converted to lysidine, thus changing the amino acid specificity of the tRNA from methionine to isoleucine. The polypeptide is tRNA(Ile)-lysidine synthase (Symbiobacterium thermophilum (strain DSM 24528 / JCM 14929 / IAM 14863 / T)).